A 336-amino-acid chain; its full sequence is MTQTVQTNGVQPLSKTWELSLYELQRTPQEAITDGLEIAVSPRSLHSELMCPICLDMLKNTMTTKECLHRFCADCIITALRSGNKECPTCRKKLVSKRSLRPDPNFDALISKIYPSRDEYEAHQERVLARISKHNNQQALSHSIEEGLKIQAMNRLQRGKKHQIENGSGAEDNGDSSHCSNASVHSNQEAGPSIKRTKTSDDSGLDMDNATENGGGDIALDGVSEIELVFRPHPTLMEKEDAAQTRYIKTSGNATVDHLSKYLAVRLALEEMRKNGEASPINVEAASEKQYTIYIPTASNQFTVLNGSFSLELVSEKYWKVNKPMELYFAPTKEHK.

The interval 2–179 (TQTVQTNGVQ…AEDNGDSSHC (178 aa)) is interaction with HIP2. The RING-type zinc-finger motif lies at 51–91 (CPICLDMLKNTMTTKECLHRFCADCIITALRSGNKECPTCR). An interaction with nucleosomes via an acidic patch on histone H2A and histone H2B region spans residues 93–98 (KLVSKR). A disordered region spans residues 158-218 (RGKKHQIENG…NATENGGGDI (61 aa)). Over residues 176–190 (SSHCSNASVHSNQEA) the composition is skewed to polar residues.

In terms of assembly, component of chromatin-associated Polycomb (PcG) complexes. Component of a PRC1-like complex. Component of some MLL1/MLL complex.

It is found in the nucleus. It localises to the cytoplasm. The protein localises to the chromosome. It catalyses the reaction S-ubiquitinyl-[E2 ubiquitin-conjugating enzyme]-L-cysteine + [acceptor protein]-L-lysine = [E2 ubiquitin-conjugating enzyme]-L-cysteine + N(6)-ubiquitinyl-[acceptor protein]-L-lysine.. It participates in protein modification; protein ubiquitination. Its function is as follows. E3 ubiquitin-protein ligase that mediates monoubiquitination of 'Lys-119' of histone H2A (H2AK119Ub), thereby playing a central role in histone code and gene regulation. H2AK119Ub gives a specific tag for epigenetic transcriptional repression. Essential component of a Polycomb group (PcG) multiprotein PRC1-like complex, a complex class required to maintain the transcriptionally repressive state of many genes, including Hox genes, throughout development. PcG PRC1 complex acts via chromatin remodeling and modification of histones, rendering chromatin heritably changed in its expressibility. In Danio rerio (Zebrafish), this protein is E3 ubiquitin-protein ligase RING2 (rnf2).